A 615-amino-acid polypeptide reads, in one-letter code: Lipoprotein LpqB (615 aa).

Residues 1–29 form the signal peptide; it reads MGADRGRGGRRRPARVVAYAVGGVVLLAG. C30 carries the N-palmitoyl cysteine lipid modification. A lipid anchor (S-diacylglycerol cysteine) is attached at C30. The segment at 100–123 is disordered; sequence PDESATVLAGGPGTESDHSGNRED. Residues 114-123 show a composition bias toward basic and acidic residues; that stretch reads ESDHSGNRED.

It belongs to the LpqB lipoprotein family.

The protein resides in the cell membrane. This chain is Lipoprotein LpqB, found in Streptomyces coelicolor (strain ATCC BAA-471 / A3(2) / M145).